A 95-amino-acid polypeptide reads, in one-letter code: Putative pterin-4-alpha-carbinolamine dehydratase (95 aa).

The protein belongs to the pterin-4-alpha-carbinolamine dehydratase family.

It carries out the reaction (4aS,6R)-4a-hydroxy-L-erythro-5,6,7,8-tetrahydrobiopterin = (6R)-L-erythro-6,7-dihydrobiopterin + H2O. The sequence is that of Putative pterin-4-alpha-carbinolamine dehydratase from Nocardia farcinica (strain IFM 10152).